A 1233-amino-acid chain; its full sequence is DNA-directed RNA polymerase subunit beta' (1233 aa).

Residues cysteine 61, cysteine 63, cysteine 76, and cysteine 79 each coordinate Zn(2+). Residues aspartate 455, aspartate 457, and aspartate 459 each contribute to the Mg(2+) site. 4 residues coordinate Zn(2+): cysteine 824, cysteine 898, cysteine 905, and cysteine 908. Residues 1211–1220 (ELQKAFDKEP) are compositionally biased toward basic and acidic residues. Residues 1211-1233 (ELQKAFDKEPASSTGNKASNSAK) form a disordered region. The span at 1221–1233 (ASSTGNKASNSAK) shows a compositional bias: polar residues.

It belongs to the RNA polymerase beta' chain family. As to quaternary structure, the RNAP catalytic core consists of 2 alpha, 1 beta, 1 beta' and 1 omega subunit. When a sigma factor is associated with the core the holoenzyme is formed, which can initiate transcription. Mg(2+) is required as a cofactor. Zn(2+) serves as cofactor.

It catalyses the reaction RNA(n) + a ribonucleoside 5'-triphosphate = RNA(n+1) + diphosphate. In terms of biological role, DNA-dependent RNA polymerase catalyzes the transcription of DNA into RNA using the four ribonucleoside triphosphates as substrates. The sequence is that of DNA-directed RNA polymerase subunit beta' from Oenococcus oeni (strain ATCC BAA-331 / PSU-1).